Reading from the N-terminus, the 488-residue chain is Bifunctional protein HldE (488 aa).

The segment at 1–332 (MRESFLDTIQ…QELQSQQSAA (332 aa)) is ribokinase. Residue 208-211 (NKRE) participates in ATP binding. The active site involves D277. Residues 359 to 488 (FTNGCFDLLH…TSNIIRKLAS (130 aa)) form a cytidylyltransferase region.

The protein in the N-terminal section; belongs to the carbohydrate kinase PfkB family. This sequence in the C-terminal section; belongs to the cytidylyltransferase family. Homodimer.

The enzyme catalyses D-glycero-beta-D-manno-heptose 7-phosphate + ATP = D-glycero-beta-D-manno-heptose 1,7-bisphosphate + ADP + H(+). The catalysed reaction is D-glycero-beta-D-manno-heptose 1-phosphate + ATP + H(+) = ADP-D-glycero-beta-D-manno-heptose + diphosphate. It participates in nucleotide-sugar biosynthesis; ADP-L-glycero-beta-D-manno-heptose biosynthesis; ADP-L-glycero-beta-D-manno-heptose from D-glycero-beta-D-manno-heptose 7-phosphate: step 1/4. The protein operates within nucleotide-sugar biosynthesis; ADP-L-glycero-beta-D-manno-heptose biosynthesis; ADP-L-glycero-beta-D-manno-heptose from D-glycero-beta-D-manno-heptose 7-phosphate: step 3/4. Catalyzes the phosphorylation of D-glycero-D-manno-heptose 7-phosphate at the C-1 position to selectively form D-glycero-beta-D-manno-heptose-1,7-bisphosphate. Its function is as follows. Catalyzes the ADP transfer from ATP to D-glycero-beta-D-manno-heptose 1-phosphate, yielding ADP-D-glycero-beta-D-manno-heptose. The protein is Bifunctional protein HldE of Methylobacillus flagellatus (strain ATCC 51484 / DSM 6875 / VKM B-1610 / KT).